The chain runs to 339 residues: Acyl-CoA dehydrogenase FadE28 (339 aa).

Residues Arg-227, Gln-238, His-295, and Gly-299 each contribute to the FAD site.

Belongs to the acyl-CoA dehydrogenase family. As to quaternary structure, heterotetramer composed of FadE28 and FadE29. FAD is required as a cofactor.

The catalysed reaction is 3-oxochol-4-en-22-oyl-CoA + A = 3-oxochola-4,17-dien-22-oyl-CoA + AH2. Its pathway is steroid metabolism; cholesterol degradation. Involved in the third cycle of side chain dehydrogenation in the beta-oxidation of cholesterol catabolism. May play an important role for the initial macrophage invasion, possibly in response to the acidification of phagosome. It contributes partly to the virulence by increasing the efficiency of beta-oxidation. Catalyzes the dehydrogenation of 2'-propanoyl-CoA ester side chains of 3-oxo-4-pregnene-20-carboxyl-CoA (3-OPC-CoA) to yield 3-oxo-4,17-pregnadiene-20-carboxyl-CoA (3-OPDC-CoA). Also able to dehydrogenate steroyl-CoA such as 3-oxo-chol-4-en-24-oyl-CoA (3-OCO-CoA), 1beta-(2'-propanoyl-CoA)-3a-alpha-H-7a-beta-methylhexahydro-4-indanone (indanone-CoA ester), hexahydroindanone and pregenenone. The chain is Acyl-CoA dehydrogenase FadE28 (fadE28) from Mycobacterium tuberculosis (strain ATCC 25618 / H37Rv).